A 401-amino-acid polypeptide reads, in one-letter code: Type 3 secretion system translocon protein SctE (401 aa).

Residues 129-160 (IQRLHEQNMKKIEENQEKIKETEENAKQVKKS) adopt a coiled-coil conformation. Helical transmembrane passes span 166–186 (IFGWLIAIASVVIGAIMVASG) and 225–245 (LGPILTAIEVALTVVSTVMTF). A coiled-coil region spans residues 345-379 (LALNKADMAALQSIIDRLKEELSHLSESHRQVMEL).

The protein belongs to the SctE/SipB/YopB family. As to quaternary structure, the core secretion machinery of the T3SS is composed of approximately 20 different proteins, including cytoplasmic components, a base, an export apparatus and a needle. This subunit is involved in the formation of a pore, called the translocon, in host membrane. Interacts with YopD/SctB. Together with YopD/SctB, forms a multimeric integral membrane complex with a mass of between 500 and 700 kDa.

It is found in the secreted. Its subcellular location is the host membrane. Its function is as follows. Component of the type III secretion system (T3SS), also called injectisome, which is used to inject bacterial effector proteins into eukaryotic host cells. YopB/SctE and YopD/SctB are inserted into the host membrane where they form a pore and allow the translocation of effector proteins into the cytosol of target cells. Is an essential virulence determinant. Required for YopE translocation. Essential for the establishment of Yersinia infections in a mouse model system, but not for the targeting of effector Yops. May modulate the host's immune response at a distance from the site of infection. This chain is Type 3 secretion system translocon protein SctE, found in Yersinia enterocolitica.